A 573-amino-acid chain; its full sequence is Phosphoenolpyruvate-protein phosphotransferase (573 aa).

The active-site Tele-phosphohistidine intermediate is histidine 190. Phosphoenolpyruvate-binding residues include arginine 297 and arginine 333. 2 residues coordinate Mg(2+): glutamate 432 and aspartate 456. Residues 455–456 and arginine 466 contribute to the phosphoenolpyruvate site; that span reads ND. The Proton donor role is filled by cysteine 503.

It belongs to the PEP-utilizing enzyme family. As to quaternary structure, homodimer. It depends on Mg(2+) as a cofactor.

It is found in the cytoplasm. It catalyses the reaction L-histidyl-[protein] + phosphoenolpyruvate = N(pros)-phospho-L-histidyl-[protein] + pyruvate. Its function is as follows. General (non sugar-specific) component of the phosphoenolpyruvate-dependent sugar phosphotransferase system (sugar PTS). This major carbohydrate active-transport system catalyzes the phosphorylation of incoming sugar substrates concomitantly with their translocation across the cell membrane. Enzyme I transfers the phosphoryl group from phosphoenolpyruvate (PEP) to the phosphoryl carrier protein (HPr). The sequence is that of Phosphoenolpyruvate-protein phosphotransferase (ptsI) from Priestia megaterium (Bacillus megaterium).